A 162-amino-acid polypeptide reads, in one-letter code: SsrA-binding protein (162 aa).

This sequence belongs to the SmpB family.

The protein resides in the cytoplasm. Required for rescue of stalled ribosomes mediated by trans-translation. Binds to transfer-messenger RNA (tmRNA), required for stable association of tmRNA with ribosomes. tmRNA and SmpB together mimic tRNA shape, replacing the anticodon stem-loop with SmpB. tmRNA is encoded by the ssrA gene; the 2 termini fold to resemble tRNA(Ala) and it encodes a 'tag peptide', a short internal open reading frame. During trans-translation Ala-aminoacylated tmRNA acts like a tRNA, entering the A-site of stalled ribosomes, displacing the stalled mRNA. The ribosome then switches to translate the ORF on the tmRNA; the nascent peptide is terminated with the 'tag peptide' encoded by the tmRNA and targeted for degradation. The ribosome is freed to recommence translation, which seems to be the essential function of trans-translation. The polypeptide is SsrA-binding protein (Sorangium cellulosum (strain So ce56) (Polyangium cellulosum (strain So ce56))).